A 519-amino-acid polypeptide reads, in one-letter code: Glucoamylase GLA1 (519 aa).

The signal sequence occupies residues 1-27; sequence MRFGVLISVFVAIVSALPLQEGPLNKR. Asn115 and Asn127 each carry an N-linked (GlcNAc...) asparagine glycan. Trp166 lines the substrate pocket. Residue Asn205 is glycosylated (N-linked (GlcNAc...) asparagine). The active-site Proton acceptor is Asp234. The Proton donor role is filled by Glu237.

This sequence belongs to the glycosyl hydrolase 15 family.

The enzyme catalyses Hydrolysis of terminal (1-&gt;4)-linked alpha-D-glucose residues successively from non-reducing ends of the chains with release of beta-D-glucose.. This is Glucoamylase GLA1 (GLA1) from Saccharomycopsis fibuligera (Yeast).